Reading from the N-terminus, the 415-residue chain is Adipocyte plasma membrane-associated protein (415 aa).

The segment at 1–29 (MSEADGLRQRRPLRPQVVTDDGQVPEVKE) is disordered. Ser2 is modified (N-acetylserine). Residues 2-39 (SEADGLRQRRPLRPQVVTDDGQVPEVKEGSSFSGRVFR) are Cytoplasmic-facing. A Phosphothreonine modification is found at Thr19. The helical; Signal-anchor for type II membrane protein transmembrane segment at 40–60 (MTFLMLAVSLAIPLLGAMMLL) threads the bilayer. Topologically, residues 61–415 (ESPIDPQSFS…FICRLSLQSI (355 aa)) are extracellular. A glycan (N-linked (GlcNAc...) asparagine) is linked at Asn159.

This sequence belongs to the strictosidine synthase family. Glycosylated in vitro. As to expression, strongly expressed in adipose tissue. Highly expressed in liver, heart, and kidney. Expressed at intermediate level in brain and lung. Weakly expressed in spleen, skeletal muscle and testis.

The protein resides in the membrane. Exhibits strong arylesterase activity with beta-naphthyl acetate and phenyl acetate. May play a role in adipocyte differentiation. This Mus musculus (Mouse) protein is Adipocyte plasma membrane-associated protein (Apmap).